The following is a 962-amino-acid chain: MPRSTWFKALLLLVALWGPAVQADIGWQPLQETIRKSDKDTRQYQAIRLDNDMVVLLVSDPQAVKSLSALVVPVVSLEDPEAHQGLAHYLEHMCLMGSKKYPQADSLAEYLKRHGGSHNASTAPYRTAFYLEVENDALPGAVDRLADAIAAPLLNKKYAERERNAVNAELTMARTRDGMRMAQVSAETINPAHPGSHFSGGNLETLSDKPGNPVQQALIAFHEKYYSSNLMKAVIYSNKPLPELASIAAATYGRVPNKQIKKPEITVPVITEAQKGIIIHYVPALPRKVLRVEFRIDNNSAQFRSKTDELVSYLIGNRSPGTLSDWLQKQGLVEGISADSDPIVNGNSGVFAISATLTDKGLANRDEVVAAIFSYLNTLREKGIDKRYFDELAHVLDLDFRYPSITRDMDYVEWLADTMIRVPVAHTLDAANIADRYDPAAIKNRLAMMTPQNARIWYISPQEPHNKIAYFVDAPYQVDKISEQTFKNWQQKAQGIALSLPELNPYIPDDFTLIKNDKNYVRPELIVDKADLRVVYAPSRYFASEPKADVSVVLRNPQAMDSARNQVLFALNDYLAGMALDQLSNQAAVGGISFSTNANNGLMVTANGYTQRLPQLFLALLEGYFSYDATEEQLAQAKSWYTQMMDSAEKGKAYEQAIMPVQMISQVPYFSRDERRALLPSITLKEVMAYRNALKTGARPEFLVIGNMSEAQATSLAQDVQKQLAANGSAWCRNKDVVVEKKQSVIFEKAGSSTDSALAAVFVPVGYDEYVSAAYSAMLGQIVQPWFYNQLRTEEQLGYAVFAFPMSVGRQWGMGFLLQSNDKQPSYLWQRYQAFFPDAEAKLRAMKPEEFAQIQQAIITQMRQAPQTLGEEASRLSKDFDRGNMRFDSRDKIIAQIKLLTPQKLADFFHQAVVEPQGMAILSQIAGSQNGKAEYVHPTGWKVWDNVSALQQTLPLMSEKNE.

Positions 1–23 (MPRSTWFKALLLLVALWGPAVQA) are cleaved as a signal peptide. Residue H88 coordinates Zn(2+). Catalysis depends on E91, which acts as the Proton acceptor. Residues H92 and E169 each coordinate Zn(2+).

Belongs to the peptidase M16 family. In terms of assembly, monomer. The cofactor is Zn(2+).

It is found in the periplasm. The catalysed reaction is Preferential cleavage of 16-Tyr-|-Leu-17 and 25-Phe-|-Tyr-26 bonds of oxidized insulin B chain. Also acts on other substrates of Mw less than 7 kDa such as insulin and glucagon.. Its function is as follows. Endopeptidase that degrades small peptides of less than 7 kDa, such as glucagon and insulin. This chain is Protease 3 (ptrA), found in Salmonella typhi.